The sequence spans 447 residues: Argininosuccinate synthase (447 aa).

ATP-binding positions include A17–S25 and A43. Y99 provides a ligand contact to L-citrulline. The ATP site is built by G129 and T131. Residues T131, N135, and D136 each coordinate L-aspartate. Position 135 (N135) interacts with L-citrulline. An ATP-binding site is contributed by D136. L-citrulline contacts are provided by R139 and S192. D194 provides a ligand contact to ATP. L-citrulline is bound by residues T201, E203, and E280.

Belongs to the argininosuccinate synthase family. Type 2 subfamily. Homotetramer.

It is found in the cytoplasm. It catalyses the reaction L-citrulline + L-aspartate + ATP = 2-(N(omega)-L-arginino)succinate + AMP + diphosphate + H(+). The protein operates within amino-acid biosynthesis; L-arginine biosynthesis; L-arginine from L-ornithine and carbamoyl phosphate: step 2/3. The protein is Argininosuccinate synthase of Shigella flexneri serotype 5b (strain 8401).